Here is a 490-residue protein sequence, read N- to C-terminus: MTYKKSLGNVSTKYYKMKEDLQLDTGNILETPTIAYETYGKLNNEKSNVILVCHALTGDAHAAGWHDGDKKPGWWNIIIGPGKPLDTNRYFIICSNVLGSCKGTTGPCDINPKTNKPYGLDFPIITINDMVKAQKKLLDYLDINHLYAVVGGSMGGMQVLQWTITYPDMVRNAIMIASGAYSTPQQIAFNAVQRRSIIEDPNWKGGKYYEEGVSPEQGLSVARMIAHITYLSNESMYEKFGRKLQDKNKFSYDFSTEFQVESYLEHQGSTFTKKFDANSYLYLTKALDYFEVRKNTSLEEALKPVKSRILIMSITSDWLYTHEHMEEIVMALRANNVEVSYSRLNSEYGHDAFLIENGQMNYIISNFLSKARVKDVMSHTTLTLDYTADIKEAAELMMNCNKTHIPIVDDGKEIVGIITAWDLSKAIATDANSIDDIMTKNVLTCTEYDSLHKVIRKMKEHNISGLPVIDKNHKVIGSITTAHISNLYEK.

The AB hydrolase-1 domain occupies 48–354 (NVILVCHALT…NSEYGHDAFL (307 aa)). Ser-153 functions as the Nucleophile in the catalytic mechanism. Position 223 (Arg-223) interacts with substrate. Residues Asp-317 and His-350 contribute to the active site. Asp-351 serves as a coordination point for substrate. CBS domains follow at residues 377 to 434 (MSHT…ANSI) and 438 to 490 (MTKN…LYEK).

The protein belongs to the AB hydrolase superfamily. MetX family. In terms of assembly, homodimer.

The protein localises to the cytoplasm. It catalyses the reaction L-homoserine + acetyl-CoA = O-acetyl-L-homoserine + CoA. It functions in the pathway amino-acid biosynthesis; L-methionine biosynthesis via de novo pathway; O-acetyl-L-homoserine from L-homoserine: step 1/1. In terms of biological role, transfers an acetyl group from acetyl-CoA to L-homoserine, forming acetyl-L-homoserine. The sequence is that of Homoserine O-acetyltransferase from Methanosphaera stadtmanae (strain ATCC 43021 / DSM 3091 / JCM 11832 / MCB-3).